Here is a 552-residue protein sequence, read N- to C-terminus: Tyrosine-protein kinase Src64B (552 aa).

The 62-residue stretch at 95 to 156 (VLKRVVVALY…PLNFVAEERS (62 aa)) folds into the SH3 domain. The 98-residue stretch at 162 to 259 (WFFENVLRKE…GLCHILSRPC (98 aa)) folds into the SH2 domain. The Protein kinase domain occupies 284 to 537 (IQLLRKLGRG…TFEFLNHYFE (254 aa)). ATP-binding positions include 290–298 (LGRGNFGEV) and lysine 312. Catalysis depends on aspartate 404, which acts as the Proton acceptor. At tyrosine 434 the chain carries Phosphotyrosine; by autocatalysis.

This sequence belongs to the protein kinase superfamily. Tyr protein kinase family. SRC subfamily. Interacts with hzg. In terms of processing, phosphorylated. As to expression, after the first 8 hours of development, accumulates almost exclusively in neural tissues such as the brain, ventral nerve chord, and eye-antennal disks, and in differentiating smooth muscle.

The catalysed reaction is L-tyrosyl-[protein] + ATP = O-phospho-L-tyrosyl-[protein] + ADP + H(+). In terms of biological role, tyrosine-protein kinase that may play a role in the development of neural tissue and smooth muscle. May contribute to tyrosine phosphorylation of Dscam1, a cell surface receptor involved in targeting of growing axons during eye morphogenesis. The sequence is that of Tyrosine-protein kinase Src64B (Src64B) from Drosophila melanogaster (Fruit fly).